The following is a 585-amino-acid chain: Amyloid protein-binding protein 2 (585 aa).

8 TPR repeats span residues 50–83, 120–153, 206–239, 288–321, 333–367, 429–462, 471–505, and 514–547; these read QGRLCQLGSEFCELEVFAKVLRALDKRHLLHHCF, IQVGFVLGGFLSDAGWYSDAEKVFLSCLQLCTLH, AALYGELCALLFAKSHYDEAYKWCVEAMKEITAG, SDTLLDYGFYLLNVDNICQSVAIYQAALDIRQSV, HEDLAYSSYVHQYSSGKFDNALFHAERAIGIITHI, AKHYGNLGRLYQSMRKFKEAEEMHIKAIQIKEQL, ALSVGHLASLYNYDMNQYENAEKLYLRSIAIGKKL, and EYDYRGLIKLYNSIGNYEKVFEYHNVLSNWNRLR.

As to quaternary structure, component of a CRL2 E3 ubiquitin-protein ligase complex, also named ECS (Elongin BC-CUL2/5-SOCS-box protein) complex, composed of CUL2, Elongin BC (ELOB and ELOC), RBX1 and substrate-specific adapter APPBP2. Interacts with APP; APP interaction inhibits the E3 ubiquitin-protein ligase activity of the CRL2(APPBP2) complex. Post-translationally, rapidly degraded by the proteasome upon overexpression of a C-terminal fragment of APP.

The protein resides in the nucleus. It is found in the cytoplasm. The protein localises to the cytoskeleton. It localises to the membrane. It functions in the pathway protein modification; protein ubiquitination. With respect to regulation, E3 ubiquitin-protein ligase activity of the CRL2(APPBP2) complex is inhibited by APP. Its function is as follows. Substrate-recognition component of a Cul2-RING (CRL2) E3 ubiquitin-protein ligase complex of the DesCEND (destruction via C-end degrons) pathway, which recognizes a C-degron located at the extreme C terminus of target proteins, leading to their ubiquitination and degradation. The C-degron recognized by the DesCEND pathway is usually a motif of less than ten residues and can be present in full-length proteins, truncated proteins or proteolytically cleaved forms. The CRL2(APPBP2) complex specifically recognizes proteins with a -Arg-Xaa-Xaa-Gly degron at the C-terminus, leading to their ubiquitination and degradation. The CRL2(APPBP2) complex mediates ubiquitination and degradation of truncated SELENOV selenoproteins produced by failed UGA/Sec decoding, which end with a -Arg-Xaa-Xaa-Gly degron. May play a role in intracellular protein transport: may be involved in the translocation of APP along microtubules toward the cell surface. The sequence is that of Amyloid protein-binding protein 2 from Mus musculus (Mouse).